Consider the following 378-residue polypeptide: Spermidine/putrescine import ATP-binding protein PotA (378 aa).

The 231-residue stretch at 18-248 folds into the ABC transporter domain; the sequence is VQLAGIRKCF…PKNLFVAGFI (231 aa). 50–57 serves as a coordination point for ATP; it reads GPSGCGKT.

Belongs to the ABC transporter superfamily. Spermidine/putrescine importer (TC 3.A.1.11.1) family. In terms of assembly, the complex is composed of two ATP-binding proteins (PotA), two transmembrane proteins (PotB and PotC) and a solute-binding protein (PotD).

It localises to the cell inner membrane. It catalyses the reaction ATP + H2O + polyamine-[polyamine-binding protein]Side 1 = ADP + phosphate + polyamineSide 2 + [polyamine-binding protein]Side 1.. In terms of biological role, part of the ABC transporter complex PotABCD involved in spermidine/putrescine import. Responsible for energy coupling to the transport system. The protein is Spermidine/putrescine import ATP-binding protein PotA of Shigella flexneri.